The chain runs to 3739 residues: Cardiomyopathy-associated protein 5 (3739 aa).

Disordered stretches follow at residues 1–205, 268–814, 835–884, 967–1270, 1288–1313, 1325–1637, 1650–1969, 1986–2016, 2065–2246, 2273–2318, 2377–2498, 2513–2532, and 2579–2616; these read MESG…PPIT, SLEP…SAFV, VSVS…AIQS, LSED…SDVP, TQAS…RDAK, SSAL…NLVS, EMNR…EKGK, SSIP…AIEP, FLSN…WETR, AVGE…LALD, VYPE…SAVE, KKQE…TSKD, and SADG…SEDQ. The span at 18–47 shows a compositional bias: acidic residues; sequence ADEEVAQELETEEESEGEGEETAAESEEEP. The span at 48 to 62 shows a compositional bias: basic and acidic residues; that stretch reads DARLSDEDEEGKTKQ. The segment covering 84–106 has biased composition (polar residues); sequence TWETNSSRSSTPWASGESQTSGI. The span at 130–153 shows a compositional bias: basic residues; that stretch reads RTRKRTQKSKRGSPSLRRKGSKKR. Phosphoserine is present on serine 155. 2 stretches are compositionally biased toward polar residues: residues 156-175 and 325-336; these read LESQ…SESP and ADSNLNVPSSTE. Positions 380–406 form a coiled coil; it reads ATMVLERAKEELEQNAQGKESSEDDAS. Composition is skewed to basic and acidic residues over residues 479 to 637, 644 to 663, and 670 to 730; these read IVHR…REEE, SIVH…REEE, and SIVH…ERGV. 2 consecutive repeat copies span residues 482–493 and 494–505. A 20 X 12 AA approximate tandem repeats of R-[DE]-[EK]-[EG]-H-[AV]-P-E-[PS]-[IM]-V-[HLR] region spans residues 482 to 720; sequence REEEHAPEPI…EEHAPEPMVH (239 aa). The stretch at 506 to 519 is one 3; approximate repeat; it reads REEEHAPEPESIVH. Copy 4 of the repeat occupies 520–531; it reads REEEHAPESIVH. The 5; approximate repeat unit spans residues 532–545; that stretch reads REEEHAPEPVPIVH. The 6; approximate repeat unit spans residues 546–559; the sequence is REEEHAPEPESIVH. 4 tandem repeats follow at residues 560–571, 572–583, 584–595, and 596–607. The stretch at 608–621 is one 11; approximate repeat; the sequence is REEEHVPEPESIVR. One copy of the 12; approximate repeat lies at 622 to 633; the sequence is KGEEHAPEPIVH. The 14; approximate repeat unit spans residues 634–647; it reads REEEQVPEPESIVH. Residues 648-659 form repeat 15; sequence REEEHAPEPIVH. Residues 660-673 form a 16; approximate repeat; it reads REEEQVPEPESIVH. 4 repeat units span residues 674-685, 686-696, 697-708, and 709-720. Residues 740 to 756 are compositionally biased toward acidic residues; that stretch reads TEPEDSSLEEEIIELDY. Serine 850 carries the phosphoserine modification. Polar residues-rich tracts occupy residues 861-884 and 1151-1161; these read PAMT…AIQS and CLTSPSEQTVL. 2 stretches are compositionally biased toward basic and acidic residues: residues 1188–1197 and 1230–1242; these read AETEQNKVEP and EHSE…EESS. Polar residues predominate over residues 1337 to 1351; it reads TSVLPTSQPSVSPES. 2 stretches are compositionally biased toward basic and acidic residues: residues 1441–1460 and 1476–1486; these read LEQR…HSPP and TEVKQESKITR. A compositionally biased stretch (polar residues) spans 1522 to 1540; that stretch reads ASSSATTVPVTKLDSNSTK. Basic and acidic residues-rich tracts occupy residues 1620-1631, 1697-1706, 1726-1742, 1760-1770, 1786-1803, and 1836-1850; these read NDKHEEITRSPD, IDSRDRDRSL, GPAE…ENRK, IEQKEPKRTLH, DKPE…ENLE, and EKPD…DRKP. Polar residues predominate over residues 1854–1863; sequence QLESSESTDL. Basic and acidic residues-rich tracts occupy residues 1874–1885, 1896–1916, 1992–2001, and 2153–2165; these read DTDHTSETRNQE, LSQE…EGRK, KVSDNEDLET, and ARKE…HKET. Over residues 2181–2190 the composition is skewed to polar residues; sequence KSAQSAFTRM. Serine 2192 bears the Phosphoserine mark. 5 stretches are compositionally biased toward basic and acidic residues: residues 2212 to 2244, 2279 to 2299, 2306 to 2318, 2377 to 2419, and 2429 to 2448; these read GEDR…DGWE, RMPE…RLEQ, KLME…LALD, VYPE…ETDG, and ELEK…RRFV. Phosphoserine is present on serine 2411. Phosphoserine is present on serine 2495. Residues 2513–2523 show a composition bias toward basic and acidic residues; it reads KKQETWSDRPT. Residues 2640–2664 are a coiled coil; it reads SVDQEESEQMQDKLQYLEEKASFKS. Disordered stretches follow at residues 2667–2725, 2742–2773, 2791–2835, 2881–2959, 3027–3047, and 3111–3174; these read VHDE…QPTV, LSPG…SSAE, GPEK…GMPL, EKNE…EREI, LESE…DVNL, and PEEP…QKEP. Residues 2682–2709 show a composition bias toward basic and acidic residues; it reads SKLEVPDRKITSLKENKTKETHKTKEEI. The tract at residues 2731-3041 is required for RYR2 clustering; sequence YFEKYTLIDY…SSQGNEAGNA (311 aa). The segment covering 2762–2773 has biased composition (polar residues); that stretch reads KTLTSFPESSAE. Composition is skewed to basic and acidic residues over residues 2791–2804 and 2812–2828; these read GPEK…HAEM and KPDD…DVDS. The residue at position 2905 (serine 2905) is a Phosphoserine. Residues 2918 to 2929 show a composition bias toward basic and acidic residues; that stretch reads YILKDDILHDES. Polar residues predominate over residues 3030–3047; sequence EPSSQGNEAGNASPDVNL. The segment covering 3153–3162 has biased composition (basic and acidic residues); that stretch reads VWDRTEDQSA. The amphipathic helix H1 stretch occupies residues 3187–3214; the sequence is KSLVSEMDKALDIHKDHEVSALDTAISA. A B-box coiled-coil; BBC region spans residues 3215 to 3342; it reads VKVQLGEFLE…ERLLSAMEST (128 aa). Residues 3244 to 3323 adopt a coiled-coil conformation; it reads FNTIEEKCSK…REAEELDETV (80 aa). The amphipathic helix H2 stretch occupies residues 3301–3318; the sequence is SMDTAKDTLETIVREAEE. 2 consecutive Fibronectin type-III domains span residues 3374–3475 and 3476–3568; these read VPQP…TAPS and TPVI…TRGT. Positions 3421 to 3437 are amphipathic helix H3; that stretch reads EINELVEEYRLTVKESC. The region spanning 3550-3735 is the B30.2/SPRY domain; that stretch reads NASGTSEQSE…LHLGLEPPDS (186 aa).

Interacts with PRKAR2A. Interacts with ACTN2, DES and DTNBP1/dysbindin. Interacts with DMD/dystrophin. Interacts with the calcineurin catalytic subunit PPP3CA. Interacts with TTN. Interacts with CAPN3; this interaction, which results in CMYA5 proteolysis, may protect CAPN3 from autolysis. Interacts with FSD2. In cardiac muscles, identified in a complex composed of FSD2, CMYA5 and RYR2. In terms of processing, phosphorylated by PKA. In terms of tissue distribution, expressed in skin as well as in cardiac muscle. Expressed in skeletal muscle (at protein level).

The protein localises to the nucleus. The protein resides in the cytoplasm. Its subcellular location is the perinuclear region. It is found in the myofibril. It localises to the sarcomere. The protein localises to the m line. The protein resides in the sarcoplasmic reticulum. May serve as an anchoring protein that mediates the subcellular compartmentation of protein kinase A (PKA) via binding to PRKAR2A. May attenuate calcineurin ability to induce slow-fiber gene program in muscle and may negatively modulate skeletal muscle regeneration. Plays a role in the assembly of ryanodine receptor (RYR2) clusters in striated muscle. The sequence is that of Cardiomyopathy-associated protein 5 (Cmya5) from Mus musculus (Mouse).